The following is a 728-amino-acid chain: Catalase-peroxidase (728 aa).

Positions 1-19 are cleaved as a signal peptide; that stretch reads MSTEAKCPVTGGATRSSSA. The segment at 1-20 is disordered; the sequence is MSTEAKCPVTGGATRSSSAG. Residues 96–219 constitute a cross-link (tryptophyl-tyrosyl-methioninium (Trp-Tyr) (with M-245)); the sequence is WHAAGTYRIG…LAAVQMGLIY (124 aa). Catalysis depends on histidine 97, which acts as the Proton acceptor. The segment at residues 219–245 is a cross-link (tryptophyl-tyrosyl-methioninium (Tyr-Met) (with W-96)); sequence YVNPEGPNGKPDPVAAARDIRETFARM. Position 260 (histidine 260) interacts with heme b.

This sequence belongs to the peroxidase family. Peroxidase/catalase subfamily. As to quaternary structure, homodimer or homotetramer. Heme b serves as cofactor. Post-translationally, formation of the three residue Trp-Tyr-Met cross-link is important for the catalase, but not the peroxidase activity of the enzyme.

The enzyme catalyses H2O2 + AH2 = A + 2 H2O. It catalyses the reaction 2 H2O2 = O2 + 2 H2O. In terms of biological role, bifunctional enzyme with both catalase and broad-spectrum peroxidase activity. This Acidiphilium cryptum (strain JF-5) protein is Catalase-peroxidase.